Reading from the N-terminus, the 627-residue chain is Serine/threonine-protein kinase Nek5 (627 aa).

Positions 4–255 constitute a Protein kinase domain; it reads FHLIKIIGEG…VTSLLKRPFL (252 aa). Residues 10–18 and Lys33 contribute to the ATP site; that span reads IGEGTFGKV. The active-site Proton acceptor is the Asp124. A compositionally biased stretch (acidic residues) spans 563–580; that stretch reads QLEPGSDEDDIKFEESED. 2 disordered regions span residues 563–582 and 591–627; these read QLEP…EDEL and EKLA…KKLQ. Residues 609–619 are compositionally biased toward basic and acidic residues; the sequence is NAEEPGEKEKT.

This sequence belongs to the protein kinase superfamily. NEK Ser/Thr protein kinase family. NIMA subfamily. Mg(2+) serves as cofactor.

The protein resides in the cell projection. Its subcellular location is the cilium. The protein localises to the flagellum. The enzyme catalyses L-seryl-[protein] + ATP = O-phospho-L-seryl-[protein] + ADP + H(+). It catalyses the reaction L-threonyl-[protein] + ATP = O-phospho-L-threonyl-[protein] + ADP + H(+). The chain is Serine/threonine-protein kinase Nek5 (Nek5) from Mus musculus (Mouse).